Here is a 458-residue protein sequence, read N- to C-terminus: Nuclear transcription factor Y subunit gamma (458 aa).

Positions 305–315 are enriched in low complexity; that stretch reads QQQFSQFTDGQ. Residues 305 to 379 form a disordered region; it reads QQQFSQFTDG…QQSSTSPPPS (75 aa). The span at 339-351 shows a compositional bias: polar residues; the sequence is TGNSTPCTSSLPT.

Belongs to the NFYC/HAP5 subunit family. In terms of assembly, heterotrimeric transcription factor composed of three components, NF-YA, NF-YB and NF-YC. NF-YB and NF-YC must interact and dimerize for NF-YA association and DNA binding.

It is found in the nucleus. Its function is as follows. Component of the sequence-specific heterotrimeric transcription factor (NF-Y) which specifically recognizes a 5'-CCAAT-3' box motif found in the promoters of its target genes. NF-Y can function as both an activator and a repressor, depending on its interacting cofactors. This chain is Nuclear transcription factor Y subunit gamma (NFYC), found in Homo sapiens (Human).